The following is a 144-amino-acid chain: Transcription antitermination protein NusB (144 aa).

Belongs to the NusB family.

Involved in transcription antitermination. Required for transcription of ribosomal RNA (rRNA) genes. Binds specifically to the boxA antiterminator sequence of the ribosomal RNA (rrn) operons. In Pelotomaculum thermopropionicum (strain DSM 13744 / JCM 10971 / SI), this protein is Transcription antitermination protein NusB.